We begin with the raw amino-acid sequence, 367 residues long: Trans-enoyl reductase ffsC (367 aa).

55–58 lines the NADP(+) pocket; the sequence is CDWK. 143–150 lines the substrate pocket; sequence TGIGTLGL. NADP(+) is bound by residues 203–206, Y221, and 268–269; these read SAKN and LE. Substrate is bound at residue 288–292; that stretch reads GMAIL. Residue 357–358 coordinates NADP(+); it reads VS.

Belongs to the zinc-containing alcohol dehydrogenase family. Monomer.

The protein operates within mycotoxin biosynthesis. Functionally, trans-enoyl reductase; part of the gene cluster that mediates the biosynthesis of the cytotoxic leucine-containing cytochalasans, including aspochalasin C, aspochalasin E, TMC-169, flavichalasine F, aspergillin PZ, aspochalasin M and flavichalasine G. The first step in the pathway is catalyzed by the hybrid PKS-NRPS ffsA that utilizes 8 units of malonyl-CoA to iteratively assemble the octaketide chain before addition of L-leucine by the C-terminal NRPS modules. Because ffsA lacks a designated enoylreductase (ER) domain, the required activity is provided the enoyl reductase fssC. The methyltransferase (MT) domain of ffsA catalyzes the alpha-methylation at C10 and C14 using S-adenosyl-L-methionine as the methyl-donating cosubstrate. Reduction by the hydrolyase ffsE, followed by dehydration and intra-molecular Diels-Alder cyclization by the Diels-Alderase ffsF then yield the required isoindolone-fused macrocycle. A number of oxidative steps catalyzed by the tailoring cytochrome P450 monooxygenase ffsD, the FAD-linked oxidoreductase ffsJ and the short-chain dehydrogenase/reductase ffsI, are further required to afford the final products. The sequence is that of Trans-enoyl reductase ffsC from Aspergillus flavipes.